The following is a 246-amino-acid chain: DNA repair protein RecO (246 aa).

The protein belongs to the RecO family.

Involved in DNA repair and RecF pathway recombination. The protein is DNA repair protein RecO of Proteus mirabilis (strain HI4320).